Consider the following 423-residue polypeptide: Protein CLP1 homolog (423 aa).

ATP is bound by residues glutamate 19, lysine 60, and aspartate 122–threonine 127.

The protein belongs to the Clp1 family. Clp1 subfamily.

It localises to the nucleus. Its function is as follows. Required for endonucleolytic cleavage during polyadenylation-dependent pre-mRNA 3'-end formation. The polypeptide is Protein CLP1 homolog (cbc) (Anopheles gambiae (African malaria mosquito)).